A 413-amino-acid polypeptide reads, in one-letter code: Multidrug resistance protein MdtA (413 aa).

An N-terminal signal peptide occupies residues 1-25; it reads MKNKRRTYFFQFAVLAVVIATAYFA. Residues 394–413 are disordered; the sequence is ANTYDQMDKSKPSNSKVENT.

Belongs to the membrane fusion protein (MFP) (TC 8.A.1) family. In terms of assembly, part of a tripartite efflux system composed of MdtA, MdtB and MdtC.

The protein localises to the cell inner membrane. In Xenorhabdus bovienii (strain SS-2004) (Xenorhabdus nematophila subsp. bovienii), this protein is Multidrug resistance protein MdtA.